The following is a 100-amino-acid chain: Integration host factor subunit beta (100 aa).

This sequence belongs to the bacterial histone-like protein family. Heterodimer of an alpha and a beta chain.

This protein is one of the two subunits of integration host factor, a specific DNA-binding protein that functions in genetic recombination as well as in transcriptional and translational control. The protein is Integration host factor subunit beta of Rhodospirillum rubrum (strain ATCC 11170 / ATH 1.1.1 / DSM 467 / LMG 4362 / NCIMB 8255 / S1).